A 675-amino-acid polypeptide reads, in one-letter code: DNA ligase (675 aa).

NAD(+)-binding positions include 41–45 (DAEYD), 90–91 (SL), and glutamate 120. Lysine 122 serves as the catalytic N6-AMP-lysine intermediate. Residues arginine 143, glutamate 178, lysine 295, and lysine 319 each coordinate NAD(+). Residues cysteine 413, cysteine 416, cysteine 431, and cysteine 436 each contribute to the Zn(2+) site. Positions 596–675 (GVPQTFAGKT…ADFLQLIDRV (80 aa)) constitute a BRCT domain.

It belongs to the NAD-dependent DNA ligase family. LigA subfamily. Mg(2+) serves as cofactor. Requires Mn(2+) as cofactor.

The catalysed reaction is NAD(+) + (deoxyribonucleotide)n-3'-hydroxyl + 5'-phospho-(deoxyribonucleotide)m = (deoxyribonucleotide)n+m + AMP + beta-nicotinamide D-nucleotide.. Its function is as follows. DNA ligase that catalyzes the formation of phosphodiester linkages between 5'-phosphoryl and 3'-hydroxyl groups in double-stranded DNA using NAD as a coenzyme and as the energy source for the reaction. It is essential for DNA replication and repair of damaged DNA. This is DNA ligase from Heliobacterium modesticaldum (strain ATCC 51547 / Ice1).